A 577-amino-acid chain; its full sequence is Moesin (577 aa).

An FERM domain is found at 2–295 (PKTINVRVTT…GNHELYMRRR (294 aa)). The residue at position 74 (Ser-74) is a Phosphoserine. The residue at position 79 (Lys-79) is an N6-acetyllysine. Lys-83 bears the N6-succinyllysine mark. Positions 115–120 (IYCPPE) match the [IL]-x-C-x-x-[DE] motif motif. Tyr-116 is modified (phosphotyrosine). S-nitrosocysteine is present on Cys-117. Lys-139 and Lys-165 each carry N6-acetyllysine. Basic and acidic residues predominate over residues 376–414 (EQERKRAQSEAEKLAKERQEAEEAKEALLKASRDQKKTQ). Disordered regions lie at residues 376–415 (EQER…KTQE) and 434–518 (ARQK…NERV). Ser-407 carries the phosphoserine modification. Positions 476 to 487 (AENDQDEQDENG) are enriched in acidic residues. Positions 492–518 (ADLRADAMAKDRSEEERTTEAEKNERV) are enriched in basic and acidic residues. Ser-527 is modified (phosphoserine). At Thr-558 the chain carries Phosphothreonine; by ROCK2 and STK10.

In terms of assembly, binds NHERF1. In resting T-cells, part of a PAG1-NHERF1-MSN complex which is disrupted upon TCR activation. Interacts with PPP1R16B. Interacts with PDZD8. Interacts with SELPLG and SYK; mediates the activation of SYK by SELPLG. Interacts with PDPN (via cytoplasmic domain); activates RHOA and promotes epithelial-mesenchymal transition. Interacts with SPN/CD43 cytoplasmic tail, CD44 and ICAM2. Post-translationally, phosphorylation on Thr-558 is crucial for the formation of microvilli-like structures. Phosphorylation by ROCK2 suppresses the head-to-tail association of the N-terminal and C-terminal halves resulting in an opened conformation which is capable of actin and membrane-binding. Phosphorylation on Thr-558 by STK10 negatively regulates lymphocyte migration and polarization. In terms of processing, S-nitrosylation of Cys-117 is induced by interferon-gamma and oxidatively-modified low-densitity lipoprotein (LDL(ox)) implicating the iNOS-S100A8/9 transnitrosylase complex.

Its subcellular location is the cell membrane. It localises to the cytoplasm. It is found in the cytoskeleton. The protein localises to the apical cell membrane. The protein resides in the cell projection. Its subcellular location is the microvillus membrane. It localises to the microvillus. A head-to-tail association, of the N-terminal and C-terminal halves results in a closed conformation (inactive form) which is incapable of actin or membrane-binding. Probably involved in connections of major cytoskeletal structures to the plasma membrane. Plays a role in regulating the proliferation, migration, and adhesion of human lymphoid cells and participates in immunologic synapse formation. This is Moesin from Sus scrofa (Pig).